The sequence spans 333 residues: Phosphate acyltransferase (333 aa).

The protein belongs to the PlsX family. As to quaternary structure, homodimer. Probably interacts with PlsY.

It is found in the cytoplasm. The catalysed reaction is a fatty acyl-[ACP] + phosphate = an acyl phosphate + holo-[ACP]. Its pathway is lipid metabolism; phospholipid metabolism. In terms of biological role, catalyzes the reversible formation of acyl-phosphate (acyl-PO(4)) from acyl-[acyl-carrier-protein] (acyl-ACP). This enzyme utilizes acyl-ACP as fatty acyl donor, but not acyl-CoA. The sequence is that of Phosphate acyltransferase from Cellvibrio japonicus (strain Ueda107) (Pseudomonas fluorescens subsp. cellulosa).